Consider the following 166-residue polypeptide: 6,7-dimethyl-8-ribityllumazine synthase (166 aa).

5-amino-6-(D-ribitylamino)uracil contacts are provided by residues Trp31, 63–65 (SFE), and 85–87 (VII). 90 to 91 (GT) serves as a coordination point for (2S)-2-hydroxy-3-oxobutyl phosphate. Catalysis depends on His93, which acts as the Proton donor. A 5-amino-6-(D-ribitylamino)uracil-binding site is contributed by Phe118. Residue Arg132 coordinates (2S)-2-hydroxy-3-oxobutyl phosphate.

Belongs to the DMRL synthase family.

It carries out the reaction (2S)-2-hydroxy-3-oxobutyl phosphate + 5-amino-6-(D-ribitylamino)uracil = 6,7-dimethyl-8-(1-D-ribityl)lumazine + phosphate + 2 H2O + H(+). It participates in cofactor biosynthesis; riboflavin biosynthesis; riboflavin from 2-hydroxy-3-oxobutyl phosphate and 5-amino-6-(D-ribitylamino)uracil: step 1/2. In terms of biological role, catalyzes the formation of 6,7-dimethyl-8-ribityllumazine by condensation of 5-amino-6-(D-ribitylamino)uracil with 3,4-dihydroxy-2-butanone 4-phosphate. This is the penultimate step in the biosynthesis of riboflavin. This Cutibacterium acnes (strain DSM 16379 / KPA171202) (Propionibacterium acnes) protein is 6,7-dimethyl-8-ribityllumazine synthase.